A 330-amino-acid chain; its full sequence is ADP-L-glycero-D-manno-heptose-6-epimerase (330 aa).

NADP(+) is bound by residues 11 to 12, 32 to 33, K39, K54, 75 to 79, and N92; these read FI, DN, and EGACS. Residue Y139 is the Proton acceptor of the active site. K143 is an NADP(+) binding site. Residue N168 participates in substrate binding. NADP(+) contacts are provided by V169 and K177. The Proton acceptor role is filled by K177. Residues R179, H186, 200–203, R213, and Y292 contribute to the substrate site; that span reads FGEY.

This sequence belongs to the NAD(P)-dependent epimerase/dehydratase family. HldD subfamily. As to quaternary structure, homopentamer. The cofactor is NADP(+).

The enzyme catalyses ADP-D-glycero-beta-D-manno-heptose = ADP-L-glycero-beta-D-manno-heptose. It participates in nucleotide-sugar biosynthesis; ADP-L-glycero-beta-D-manno-heptose biosynthesis; ADP-L-glycero-beta-D-manno-heptose from D-glycero-beta-D-manno-heptose 7-phosphate: step 4/4. Functionally, catalyzes the interconversion between ADP-D-glycero-beta-D-manno-heptose and ADP-L-glycero-beta-D-manno-heptose via an epimerization at carbon 6 of the heptose. This is ADP-L-glycero-D-manno-heptose-6-epimerase from Paraburkholderia phymatum (strain DSM 17167 / CIP 108236 / LMG 21445 / STM815) (Burkholderia phymatum).